The primary structure comprises 49 residues: MRVKVTLACTECKRRNYNTMKNKKNDPDRLEMNKYCPHCHKHAAHKETK.

This sequence belongs to the bacterial ribosomal protein bL33 family.

This chain is Large ribosomal subunit protein bL33, found in Clostridium botulinum (strain ATCC 19397 / Type A).